We begin with the raw amino-acid sequence, 500 residues long: Protein shisa-6 (500 aa).

The first 25 residues, 1 to 25, serve as a signal peptide directing secretion; sequence MALRRLLLLLLLSLESLDLLPSVHG. At 26–174 the chain is on the extracellular side; it reads ARGRAANRTL…NKYDPEKDKT (149 aa). Residues asparagine 32 and asparagine 59 are each glycosylated (N-linked (GlcNAc...) asparagine). The segment at 52 to 73 is disordered; it reads ARGGRELNGTARAPGIPEAGSR. The chain crosses the membrane as a helical span at residues 175–195; it reads NFTVYITCGVIAFVIVAGVFA. At 196–500 the chain is on the cytoplasmic side; the sequence is KVSYDKAHRP…YTASKTEVTV (305 aa). Positions 240–255 are enriched in polar residues; it reads TSPKENTPVRSSSKNH. 2 disordered regions span residues 240 to 269 and 349 to 378; these read TSPK…PEKP and SQQK…DRGL. 3 positions are modified to phosphoserine: serine 391, serine 397, and serine 409. Threonine 433 is modified (phosphothreonine). Residues 444–470 form a disordered region; the sequence is MHSHPSASNNSYATLGQSQTAAKRHAF. The span at 448–464 shows a compositional bias: polar residues; it reads PSASNNSYATLGQSQTA. The residue at position 477 (threonine 477) is a Phosphothreonine. The short motif at 497–500 is the PDZ-binding element; that stretch reads EVTV.

Belongs to the shisa family. In terms of assembly, component of the postsynaptic hippocampal AMPA-type glutamate receptor (AMPAR) complex, at least composed of pore forming AMPAR subunits GRIA1, GRIA2 and GRIA3 and AMPAR auxiliary proteins SHISA6 and SHISA7. Interacts (via PDZ-binding motif) with DLG4/PSD-95 (via PDZ domain); the interaction is direct. Expressed in the developing ventral mesencephalon.

It is found in the membrane. The protein resides in the postsynaptic density. Involved in maintenance of high-frequency synaptic transmission at hippocampal CA3-CA1 synapses. Regulates AMPA-type glutamate receptor (AMPAR) immobilization at postsynaptic density keeping the channels in an activated state in the presence of glutamate and preventing synaptic depression. May play a role in self-renewal and differentiation of spermatogonial stem cells by inhibiting canonical Wnt signaling pathway. This Homo sapiens (Human) protein is Protein shisa-6.